The following is a 43-amino-acid chain: SPbeta prophage-derived uncharacterized protein YopG (43 aa).

The sequence is that of SPbeta prophage-derived uncharacterized protein YopG (yopG) from Bacillus subtilis (strain 168).